The sequence spans 1400 residues: Telomere length regulator protein rif1 (1400 aa).

2 disordered regions span residues Met-1–Arg-63 and Ser-1065–Lys-1258. Residues Ser-22–Ser-35 show a composition bias toward low complexity. 3 stretches are compositionally biased toward polar residues: residues Asn-42–Gly-52, Ser-1065–Gln-1074, and Asn-1090–Ser-1099. 2 stretches are compositionally biased toward basic and acidic residues: residues Gln-1123–Ala-1137 and Val-1151–Asp-1174. Polar residues predominate over residues Asp-1177–Ser-1230. Residues Ser-1240–Arg-1249 show a composition bias toward basic residues.

It belongs to the RIF1 family. In terms of assembly, recruited to telomeres by interaction with taz1. Does not interact with rap1, unlike the orthologous protein of budding yeast.

The protein localises to the nucleus. It localises to the chromosome. Its subcellular location is the telomere. In terms of biological role, negatively regulates telomere length. Appears to play no role in transcriptional silencing of telomeric loci. This Schizosaccharomyces pombe (strain 972 / ATCC 24843) (Fission yeast) protein is Telomere length regulator protein rif1 (rif1).